A 124-amino-acid chain; its full sequence is Pal-related lipoprotein (124 aa).

The first 18 residues, 1–18 (MRYRAVFPMLIIVFALSG), serve as a signal peptide directing secretion. Cys-19 is lipidated: N-palmitoyl cysteine. Cys-19 carries the S-diacylglycerol cysteine lipid modification.

It localises to the cell membrane. The sequence is that of Pal-related lipoprotein (slp) from Bacillus subtilis (strain 168).